The following is a 542-amino-acid chain: 2,3-bisphosphoglycerate-independent phosphoglycerate mutase (542 aa).

Mn(2+)-binding residues include Asp-13 and Ser-63. Ser-63 serves as the catalytic Phosphoserine intermediate. Substrate is bound by residues His-124, 154–155 (RD), Arg-186, Arg-192, 263–266 (RADR), and Lys-357. Mn(2+) is bound by residues Asp-424, His-428, Asp-465, His-466, and His-484.

This sequence belongs to the BPG-independent phosphoglycerate mutase family. In terms of assembly, monomer. Requires Mn(2+) as cofactor.

It catalyses the reaction (2R)-2-phosphoglycerate = (2R)-3-phosphoglycerate. The protein operates within carbohydrate degradation; glycolysis; pyruvate from D-glyceraldehyde 3-phosphate: step 3/5. Functionally, catalyzes the interconversion of 2-phosphoglycerate and 3-phosphoglycerate. This is 2,3-bisphosphoglycerate-independent phosphoglycerate mutase from Herpetosiphon aurantiacus (strain ATCC 23779 / DSM 785 / 114-95).